Reading from the N-terminus, the 285-residue chain is Bifunctional protein FolD (285 aa).

NADP(+)-binding positions include 166–168 (GAS) and I232.

It belongs to the tetrahydrofolate dehydrogenase/cyclohydrolase family. Homodimer.

It catalyses the reaction (6R)-5,10-methylene-5,6,7,8-tetrahydrofolate + NADP(+) = (6R)-5,10-methenyltetrahydrofolate + NADPH. The enzyme catalyses (6R)-5,10-methenyltetrahydrofolate + H2O = (6R)-10-formyltetrahydrofolate + H(+). The protein operates within one-carbon metabolism; tetrahydrofolate interconversion. Functionally, catalyzes the oxidation of 5,10-methylenetetrahydrofolate to 5,10-methenyltetrahydrofolate and then the hydrolysis of 5,10-methenyltetrahydrofolate to 10-formyltetrahydrofolate. This chain is Bifunctional protein FolD, found in Baumannia cicadellinicola subsp. Homalodisca coagulata.